The following is a 458-amino-acid chain: Argininosuccinate lyase (458 aa).

This sequence belongs to the lyase 1 family. Argininosuccinate lyase subfamily.

The protein resides in the cytoplasm. The enzyme catalyses 2-(N(omega)-L-arginino)succinate = fumarate + L-arginine. The protein operates within amino-acid biosynthesis; L-arginine biosynthesis; L-arginine from L-ornithine and carbamoyl phosphate: step 3/3. The chain is Argininosuccinate lyase from Trichlorobacter lovleyi (strain ATCC BAA-1151 / DSM 17278 / SZ) (Geobacter lovleyi).